The following is a 130-amino-acid chain: UPF0251 protein MmarC7_1642 (130 aa).

This sequence belongs to the UPF0251 family.

The sequence is that of UPF0251 protein MmarC7_1642 from Methanococcus maripaludis (strain C7 / ATCC BAA-1331).